Reading from the N-terminus, the 222-residue chain is Phosphoribosylformylglycinamidine synthase subunit PurQ (222 aa).

Residues 2–222 (RTAVIQFPGS…FESLKGALVQ (221 aa)) enclose the Glutamine amidotransferase type-1 domain. The active-site Nucleophile is the cysteine 87. Active-site residues include histidine 195 and glutamate 197.

Part of the FGAM synthase complex composed of 1 PurL, 1 PurQ and 2 PurS subunits.

The protein resides in the cytoplasm. The catalysed reaction is N(2)-formyl-N(1)-(5-phospho-beta-D-ribosyl)glycinamide + L-glutamine + ATP + H2O = 2-formamido-N(1)-(5-O-phospho-beta-D-ribosyl)acetamidine + L-glutamate + ADP + phosphate + H(+). The enzyme catalyses L-glutamine + H2O = L-glutamate + NH4(+). The protein operates within purine metabolism; IMP biosynthesis via de novo pathway; 5-amino-1-(5-phospho-D-ribosyl)imidazole from N(2)-formyl-N(1)-(5-phospho-D-ribosyl)glycinamide: step 1/2. Its function is as follows. Part of the phosphoribosylformylglycinamidine synthase complex involved in the purines biosynthetic pathway. Catalyzes the ATP-dependent conversion of formylglycinamide ribonucleotide (FGAR) and glutamine to yield formylglycinamidine ribonucleotide (FGAM) and glutamate. The FGAM synthase complex is composed of three subunits. PurQ produces an ammonia molecule by converting glutamine to glutamate. PurL transfers the ammonia molecule to FGAR to form FGAM in an ATP-dependent manner. PurS interacts with PurQ and PurL and is thought to assist in the transfer of the ammonia molecule from PurQ to PurL. In Deinococcus geothermalis (strain DSM 11300 / CIP 105573 / AG-3a), this protein is Phosphoribosylformylglycinamidine synthase subunit PurQ.